Reading from the N-terminus, the 134-residue chain is Putative protein KRIP1 (134 aa).

Residues 1–134 (MSPVHRSRTS…PDPALPLQML (134 aa)) are disordered. Polar residues-rich tracts occupy residues 9–24 (TSQTQEAHKPTSTLSF), 43–55 (SQPNACSRQSHVS), and 64–79 (CSQSKVSPPGTATNPN). The span at 119-128 (PAKPALPDPA) shows a compositional bias: pro residues.

Abundant expression is found in prostate, restricted to cells of epithelial origin in normal and diseased glands. Very low expression is detected in pancreas and ovary.

Its subcellular location is the cytoplasm. The protein localises to the nucleus. The polypeptide is Putative protein KRIP1 (KLKP1) (Homo sapiens (Human)).